A 359-amino-acid polypeptide reads, in one-letter code: Fructose-bisphosphate aldolase (359 aa).

Ser-62 lines the D-glyceraldehyde 3-phosphate pocket. Asp-109 serves as the catalytic Proton donor. Residues His-110, Asp-144, Glu-174, and His-226 each contribute to the Zn(2+) site. A dihydroxyacetone phosphate-binding site is contributed by Gly-227. His-265 contributes to the Zn(2+) binding site. Dihydroxyacetone phosphate-binding positions include Gly-266 to Ser-268 and Asn-287 to Thr-290.

It belongs to the class II fructose-bisphosphate aldolase family. As to quaternary structure, homodimer. Requires Zn(2+) as cofactor.

It localises to the cytoplasm. The enzyme catalyses beta-D-fructose 1,6-bisphosphate = D-glyceraldehyde 3-phosphate + dihydroxyacetone phosphate. Its pathway is carbohydrate degradation; glycolysis; D-glyceraldehyde 3-phosphate and glycerone phosphate from D-glucose: step 4/4. In terms of biological role, catalyzes the aldol condensation of dihydroxyacetone phosphate (DHAP or glycerone-phosphate) with glyceraldehyde 3-phosphate (G3P) to form fructose 1,6-bisphosphate (FBP) in gluconeogenesis and the reverse reaction in glycolysis. This Candida albicans (strain SC5314 / ATCC MYA-2876) (Yeast) protein is Fructose-bisphosphate aldolase (FBA1).